The primary structure comprises 215 residues: Cytochrome b6 (215 aa).

Residues 32 to 52 (IFYCLGGITLTCFLVQVATGF) form a helical membrane-spanning segment. A heme c-binding site is contributed by C35. The heme b site is built by H86 and H100. The next 3 membrane-spanning stretches (helical) occupy residues 90-110 (ASMM…TGGF), 116-136 (LTWV…VTGY), and 186-206 (LHTF…FLMI). Residues H187 and H202 each coordinate heme b.

It belongs to the cytochrome b family. PetB subfamily. The 4 large subunits of the cytochrome b6-f complex are cytochrome b6, subunit IV (17 kDa polypeptide, PetD), cytochrome f and the Rieske protein, while the 4 small subunits are PetG, PetL, PetM and PetN. The complex functions as a dimer. Requires heme b as cofactor. It depends on heme c as a cofactor.

The protein resides in the plastid. Its subcellular location is the chloroplast thylakoid membrane. Its function is as follows. Component of the cytochrome b6-f complex, which mediates electron transfer between photosystem II (PSII) and photosystem I (PSI), cyclic electron flow around PSI, and state transitions. The chain is Cytochrome b6 from Morus indica (Mulberry).